The chain runs to 375 residues: Probable pectin lyase C (375 aa).

Residues 1 to 20 form the signal peptide; it reads MKITSTIPAVLLGLAPLSAA. 2 disulfide bridges follow: C83–C100 and C92–C220. R250 is a catalytic residue. Cysteines 317 and 325 form a disulfide.

The protein belongs to the polysaccharide lyase 1 family.

The protein resides in the secreted. The enzyme catalyses Eliminative cleavage of (1-&gt;4)-alpha-D-galacturonan methyl ester to give oligosaccharides with 4-deoxy-6-O-methyl-alpha-D-galact-4-enuronosyl groups at their non-reducing ends.. Pectinolytic enzymes consist of four classes of enzymes: pectin lyase, polygalacturonase, pectin methylesterase and rhamnogalacturonase. Among pectinolytic enzymes, pectin lyase is the most important in depolymerization of pectin, since it cleaves internal glycosidic bonds of highly methylated pectins. The polypeptide is Probable pectin lyase C (pelC) (Aspergillus oryzae (strain ATCC 42149 / RIB 40) (Yellow koji mold)).